The primary structure comprises 184 residues: UPF0149 protein PP_5201 (184 aa).

The protein belongs to the UPF0149 family.

This Pseudomonas putida (strain ATCC 47054 / DSM 6125 / CFBP 8728 / NCIMB 11950 / KT2440) protein is UPF0149 protein PP_5201.